Here is a 213-residue protein sequence, read N- to C-terminus: Uridine kinase (213 aa).

15-22 (GASASGKS) provides a ligand contact to ATP.

This sequence belongs to the uridine kinase family.

It is found in the cytoplasm. The catalysed reaction is uridine + ATP = UMP + ADP + H(+). The enzyme catalyses cytidine + ATP = CMP + ADP + H(+). Its pathway is pyrimidine metabolism; CTP biosynthesis via salvage pathway; CTP from cytidine: step 1/3. It functions in the pathway pyrimidine metabolism; UMP biosynthesis via salvage pathway; UMP from uridine: step 1/1. In Proteus mirabilis (strain HI4320), this protein is Uridine kinase.